The chain runs to 871 residues: Translation initiation factor IF-2 (871 aa).

Disordered regions lie at residues 60–101 and 184–203; these read KKNI…QEVK and ESLKKKKKEKKSFVASKKES. A compositionally biased stretch (basic residues) spans 61–72; it reads KNIKTPTAKKPK. A compositionally biased stretch (basic and acidic residues) spans 73-101; that stretch reads KENIKEQEKLNESEKKEPKKEEKLKQEVK. A tr-type G domain is found at 370–537; it reads TRAPVITIMG…IVLLQADILE (168 aa). The G1 stretch occupies residues 379 to 386; it reads GHVDHGKT. 379-386 is a GTP binding site; sequence GHVDHGKT. Positions 404–408 are G2; sequence GITQH. Residues 425 to 428 are G3; it reads DTPG. GTP is bound by residues 425-429 and 479-482; these read DTPGH and NKMD. A G4 region spans residues 479-482; sequence NKMD. The G5 stretch occupies residues 515 to 517; that stretch reads SAK.

The protein belongs to the TRAFAC class translation factor GTPase superfamily. Classic translation factor GTPase family. IF-2 subfamily.

The protein localises to the cytoplasm. Its function is as follows. One of the essential components for the initiation of protein synthesis. Protects formylmethionyl-tRNA from spontaneous hydrolysis and promotes its binding to the 30S ribosomal subunits. Also involved in the hydrolysis of GTP during the formation of the 70S ribosomal complex. This Campylobacter jejuni subsp. jejuni serotype O:6 (strain 81116 / NCTC 11828) protein is Translation initiation factor IF-2.